The sequence spans 93 residues: Small ribosomal subunit protein uS19c (93 aa).

This sequence belongs to the universal ribosomal protein uS19 family.

The protein localises to the plastid. The protein resides in the chloroplast. Its function is as follows. Protein S19 forms a complex with S13 that binds strongly to the 16S ribosomal RNA. In Lolium perenne (Perennial ryegrass), this protein is Small ribosomal subunit protein uS19c.